The sequence spans 401 residues: Imidazolonepropionase (401 aa).

Positions 66 and 68 each coordinate Fe(3+). His-66 and His-68 together coordinate Zn(2+). Residues Arg-75, Tyr-138, and His-171 each contribute to the 4-imidazolone-5-propanoate site. Tyr-138 is a binding site for N-formimidoyl-L-glutamate. His-236 contacts Fe(3+). His-236 is a Zn(2+) binding site. Gln-239 is a binding site for 4-imidazolone-5-propanoate. Asp-311 contacts Fe(3+). Residue Asp-311 participates in Zn(2+) binding. N-formimidoyl-L-glutamate-binding residues include Asn-313 and Gly-315. 4-imidazolone-5-propanoate is bound at residue Thr-316.

This sequence belongs to the metallo-dependent hydrolases superfamily. HutI family. Zn(2+) serves as cofactor. It depends on Fe(3+) as a cofactor.

The protein localises to the cytoplasm. It carries out the reaction 4-imidazolone-5-propanoate + H2O = N-formimidoyl-L-glutamate. Its pathway is amino-acid degradation; L-histidine degradation into L-glutamate; N-formimidoyl-L-glutamate from L-histidine: step 3/3. Its function is as follows. Catalyzes the hydrolytic cleavage of the carbon-nitrogen bond in imidazolone-5-propanoate to yield N-formimidoyl-L-glutamate. It is the third step in the universal histidine degradation pathway. This chain is Imidazolonepropionase, found in Pseudomonas fluorescens (strain Pf0-1).